We begin with the raw amino-acid sequence, 94 residues long: ESAT-6-like protein EsxI (94 aa).

Belongs to the WXG100 family. ESAT-6 subfamily.

It is found in the secreted. The polypeptide is ESAT-6-like protein EsxI (Mycobacterium tuberculosis (strain CDC 1551 / Oshkosh)).